Consider the following 661-residue polypeptide: UvrABC system protein B (661 aa).

The 156-residue stretch at 26-181 (KGIQEGRKHQ…LLRKLVDIQY (156 aa)) folds into the Helicase ATP-binding domain. 39-46 (GATGTGKT) contacts ATP. The Beta-hairpin signature appears at 92 to 115 (YYDYYQPEAYVPQTDTFIEKDASI). The 167-residue stretch at 430 to 596 (QIDDLIGEIQ…TINKEIRDVI (167 aa)) folds into the Helicase C-terminal domain. One can recognise a UVR domain in the interval 625 to 660 (QKVVEQMEHEMKEAARALDFERAAELRDLLLELKAE).

This sequence belongs to the UvrB family. As to quaternary structure, forms a heterotetramer with UvrA during the search for lesions. Interacts with UvrC in an incision complex.

It localises to the cytoplasm. Functionally, the UvrABC repair system catalyzes the recognition and processing of DNA lesions. A damage recognition complex composed of 2 UvrA and 2 UvrB subunits scans DNA for abnormalities. Upon binding of the UvrA(2)B(2) complex to a putative damaged site, the DNA wraps around one UvrB monomer. DNA wrap is dependent on ATP binding by UvrB and probably causes local melting of the DNA helix, facilitating insertion of UvrB beta-hairpin between the DNA strands. Then UvrB probes one DNA strand for the presence of a lesion. If a lesion is found the UvrA subunits dissociate and the UvrB-DNA preincision complex is formed. This complex is subsequently bound by UvrC and the second UvrB is released. If no lesion is found, the DNA wraps around the other UvrB subunit that will check the other stand for damage. This chain is UvrABC system protein B, found in Bacillus velezensis (strain DSM 23117 / BGSC 10A6 / LMG 26770 / FZB42) (Bacillus amyloliquefaciens subsp. plantarum).